The following is a 345-amino-acid chain: Dihydroorotase (345 aa).

Positions 13 and 15 each coordinate Zn(2+). Residues 15-17 and N41 each bind substrate; that span reads HLR. Zn(2+) is bound by residues K99, H136, H174, and D247. An N6-carboxylysine modification is found at K99. H136 is a substrate binding site. D247 is an active-site residue. Residues H251 and A263 each coordinate substrate.

It belongs to the metallo-dependent hydrolases superfamily. DHOase family. Class II DHOase subfamily. Homodimer. Zn(2+) serves as cofactor.

It catalyses the reaction (S)-dihydroorotate + H2O = N-carbamoyl-L-aspartate + H(+). The protein operates within pyrimidine metabolism; UMP biosynthesis via de novo pathway; (S)-dihydroorotate from bicarbonate: step 3/3. Functionally, catalyzes the reversible cyclization of carbamoyl aspartate to dihydroorotate. The protein is Dihydroorotase of Halorhodospira halophila (strain DSM 244 / SL1) (Ectothiorhodospira halophila (strain DSM 244 / SL1)).